We begin with the raw amino-acid sequence, 842 residues long: Protein P (842 aa).

The segment at 1–177 (MPLSYQHFRR…FCGSPYSWEQ (177 aa)) is terminal protein domain (TP). Positions 178 to 345 (ELHHGAFLDG…YCLTHLVNLL (168 aa)) are spacer. Positions 186-273 (DGPSRMGEES…AKNIASRSAS (88 aa)) are disordered. Residues 223–239 (GPQSQQRPLDGSQQGRS) are compositionally biased toward polar residues. Positions 346-689 (EDWGPCTEHG…YLNLYPVARQ (344 aa)) are polymerase/reverse transcriptase domain (RT). In terms of domain architecture, Reverse transcriptase spans 356–599 (KHHIRIPRTP…YSLNFMGYVI (244 aa)). 3 residues coordinate Mg(2+): D428, D550, and D551.

The protein belongs to the hepadnaviridae P protein family.

The catalysed reaction is DNA(n) + a 2'-deoxyribonucleoside 5'-triphosphate = DNA(n+1) + diphosphate. It carries out the reaction Endonucleolytic cleavage to 5'-phosphomonoester.. Activated by host HSP70 and HSP40 in vitro to be able to bind the epsilon loop of the pgRNA. Because deletion of the RNase H region renders the protein partly chaperone-independent, the chaperones may be needed indirectly to relieve occlusion of the RNA-binding site by this domain. Inhibited by several reverse-transcriptase inhibitors: Lamivudine, Adefovir and Entecavir. Multifunctional enzyme that converts the viral RNA genome into dsDNA in viral cytoplasmic capsids. This enzyme displays a DNA polymerase activity that can copy either DNA or RNA templates, and a ribonuclease H (RNase H) activity that cleaves the RNA strand of RNA-DNA heteroduplexes in a partially processive 3'- to 5'-endonucleasic mode. Neo-synthesized pregenomic RNA (pgRNA) are encapsidated together with the P protein, and reverse-transcribed inside the nucleocapsid. Initiation of reverse-transcription occurs first by binding the epsilon loop on the pgRNA genome, and is initiated by protein priming, thereby the 5'-end of (-)DNA is covalently linked to P protein. Partial (+)DNA is synthesized from the (-)DNA template and generates the relaxed circular DNA (RC-DNA) genome. After budding and infection, the RC-DNA migrates in the nucleus, and is converted into a plasmid-like covalently closed circular DNA (cccDNA). The activity of P protein does not seem to be necessary for cccDNA generation, and is presumably released from (+)DNA by host nuclear DNA repair machinery. In Homo sapiens (Human), this protein is Protein P.